The following is an 830-amino-acid chain: MGIEKFETFILISTISILLCICHGFTPVDNYLINCGSPTNGTLMGRIFLSDKLSSKLLTSSKEILASVGGNSGSDIYHTARVFTEVSSYKFSVTRGRHWVRLYFNPFDYQNFKMGSAKFAVSSQSHVLLSDFTVTSSKVVKEYSLNVTTNDLVLTFTPSSGSFAFVNAIEVISIPDTLITGSPRFVGNPAQFPDMSMQGLETIHRVNMGGPLVASNNDTLTRTWVPDSEFLLEKNLAKSMSKFSTVNFVPGYATEDSAPRTVYGSCTEMNSADNPNSIFNVTWEFDVDPGFQYYFRFHFCDIVSLSLNQLYFNLYVDSMVAATDIDLSTLVDNTLAGAYSMDFVTQTPKGSNKVRVSIGPSTVHTDYPNAIVNGLEIMKMNNSKGQLSTGTFVPGSSSSSKSNLGLIVGSAIGSLLAVVFLGSCFVLYKKRKRGQDGHSKTWMPFSINGTSMGSKYSNGTTLTSITTNANYRIPFAAVKDATNNFDESRNIGVGGFGKVYKGELNDGTKVAVKRGNPKSQQGLAEFRTEIEMLSQFRHRHLVSLIGYCDENNEMILIYEYMENGTVKSHLYGSGLPSLTWKQRLEICIGAARGLHYLHTGDSKPVIHRDVKSANILLDENFMAKVADFGLSKTGPELDQTHVSTAVKGSFGYLDPEYFRRQQLTDKSDVYSFGVVLFEVLCARPVIDPTLPREMVNLAEWAMKWQKKGQLDQIIDQSLRGNIRPDSLRKFAETGEKCLADYGVDRPSMGDVLWNLEYALQLQEAVIDGEPEDNSTNMIGELPPQINNFSQGDTSVNVPGTAGRFEESSIDDLSGVSMSKVFSQLVKSEGR.

An N-terminal signal peptide occupies residues 1–24; it reads MGIEKFETFILISTISILLCICHG. Residues 25-405 lie on the Extracellular side of the membrane; that stretch reads FTPVDNYLIN…SSSSSKSNLG (381 aa). N40, N146, N217, N280, and N381 each carry an N-linked (GlcNAc...) asparagine glycan. A helical transmembrane segment spans residues 406-426; sequence LIVGSAIGSLLAVVFLGSCFV. The Cytoplasmic segment spans residues 427–830; it reads LYKKRKRGQD…FSQLVKSEGR (404 aa). Residues 485-758 form the Protein kinase domain; sequence FDESRNIGVG…GDVLWNLEYA (274 aa). ATP-binding positions include 491-499 and K513; that span reads IGVGGFGKV. D609 (proton acceptor) is an active-site residue.

The protein belongs to the protein kinase superfamily. Ser/Thr protein kinase family. Autophosphorylated. As to expression, expressed in most vegetative tissues, including leaves, stems and roots, especially in cell elongation regions.

The protein resides in the cell membrane. Its function is as follows. Receptor-like protein kinase required for cell elongation during vegetative growth, mostly in a brassinosteroid-(BR-) independent manner. This is Receptor-like protein kinase HERK 1 (HERK1) from Arabidopsis thaliana (Mouse-ear cress).